Reading from the N-terminus, the 260-residue chain is tRNA pseudouridine synthase A (260 aa).

The active-site Nucleophile is aspartate 52. A substrate-binding site is contributed by tyrosine 111.

It belongs to the tRNA pseudouridine synthase TruA family. As to quaternary structure, homodimer.

It catalyses the reaction uridine(38/39/40) in tRNA = pseudouridine(38/39/40) in tRNA. Functionally, formation of pseudouridine at positions 38, 39 and 40 in the anticodon stem and loop of transfer RNAs. This is tRNA pseudouridine synthase A from Beijerinckia indica subsp. indica (strain ATCC 9039 / DSM 1715 / NCIMB 8712).